The primary structure comprises 805 residues: Leucine--tRNA ligase (805 aa).

Residues 40–51 carry the 'HIGH' region motif; that stretch reads PYPSGAGLHVGH. Positions 576–580 match the 'KMSKS' region motif; the sequence is KMSKS. Lysine 579 provides a ligand contact to ATP.

The protein belongs to the class-I aminoacyl-tRNA synthetase family.

It is found in the cytoplasm. The catalysed reaction is tRNA(Leu) + L-leucine + ATP = L-leucyl-tRNA(Leu) + AMP + diphosphate. The protein is Leucine--tRNA ligase of Geobacillus kaustophilus (strain HTA426).